The chain runs to 283 residues: Bifunctional protein FolD (283 aa).

NADP(+) is bound by residues 165–167 (GRS), S190, and V231.

This sequence belongs to the tetrahydrofolate dehydrogenase/cyclohydrolase family. Homodimer.

The catalysed reaction is (6R)-5,10-methylene-5,6,7,8-tetrahydrofolate + NADP(+) = (6R)-5,10-methenyltetrahydrofolate + NADPH. It catalyses the reaction (6R)-5,10-methenyltetrahydrofolate + H2O = (6R)-10-formyltetrahydrofolate + H(+). The protein operates within one-carbon metabolism; tetrahydrofolate interconversion. Catalyzes the oxidation of 5,10-methylenetetrahydrofolate to 5,10-methenyltetrahydrofolate and then the hydrolysis of 5,10-methenyltetrahydrofolate to 10-formyltetrahydrofolate. This is Bifunctional protein FolD from Bacillus pumilus (strain SAFR-032).